The following is a 179-amino-acid chain: Warthog protein 3 (179 aa).

A signal peptide spans 1 to 19 (MLYHVEMFTIILLFGFSLA). N-linked (GlcNAc...) asparagine glycans are attached at residues Asn52 and Asn147.

Expressed in the trinucleate pharyngeal gland cell g1, seam cells and hypodermis.

It is found in the secreted. Functionally, intercellular signal essential for a variety of patterning events during development. This is Warthog protein 3 (wrt-3) from Caenorhabditis elegans.